A 430-amino-acid chain; its full sequence is GTPase Obg (430 aa).

Residues 1 to 158 form the Obg domain; the sequence is MFVDQVKISL…LEVTLELKLL (158 aa). Residues 118-145 form a disordered region; it reads RGGRGGRGNSRFATPRNPAPDFSENGEP. The OBG-type G domain maps to 159–329; the sequence is ADVGLVGFPS…LLYQIADKLE (171 aa). GTP is bound by residues 165 to 172, 190 to 194, 212 to 215, 282 to 285, and 310 to 312; these read GFPSVGKS, FTTIK, DLPG, NKMD, and STI. Positions 172 and 192 each coordinate Mg(2+). Residues 352 to 430 enclose the OCT domain; the sequence is KHTPSADKFT…ILGGEFEFVE (79 aa).

The protein belongs to the TRAFAC class OBG-HflX-like GTPase superfamily. OBG GTPase family. Monomer. Requires Mg(2+) as cofactor.

The protein localises to the cytoplasm. Its function is as follows. An essential GTPase which binds GTP, GDP and possibly (p)ppGpp with moderate affinity, with high nucleotide exchange rates and a fairly low GTP hydrolysis rate. Plays a role in control of the cell cycle, stress response, ribosome biogenesis and in those bacteria that undergo differentiation, in morphogenesis control. The sequence is that of GTPase Obg from Staphylococcus epidermidis (strain ATCC 12228 / FDA PCI 1200).